A 1179-amino-acid polypeptide reads, in one-letter code: RecBCD enzyme subunit RecB (1179 aa).

The DNA-binding and helicase activity, interacts with RecC stretch occupies residues 1 to 859 (MVYSDTKTSK…IIQNGKCMNY (859 aa)). The region spanning 18–459 (NIMKKKLNIF…YYLDTNWRSS (442 aa)) is the UvrD-like helicase ATP-binding domain. 39-46 (ASAGTGKT) serves as a coordination point for ATP. The 271-residue stretch at 485-755 (EPILSSSKNL…RIITIHKSKG (271 aa)) folds into the UvrD-like helicase C-terminal domain. Residues 910-1179 (YSQITSFTKI…KLTKLILQKK (270 aa)) form a nuclease activity, interacts with RecD and RecA region. Histidine 962, aspartate 1073, and aspartate 1086 together coordinate Mg(2+). Aspartate 1086 serves as the catalytic For nuclease activity.

Belongs to the helicase family. UvrD subfamily. Heterotrimer of RecB, RecC and RecD. All subunits contribute to DNA-binding. Interacts with RecA. Requires Mg(2+) as cofactor.

The enzyme catalyses Exonucleolytic cleavage (in the presence of ATP) in either 5'- to 3'- or 3'- to 5'-direction to yield 5'-phosphooligonucleotides.. It carries out the reaction Couples ATP hydrolysis with the unwinding of duplex DNA by translocating in the 3'-5' direction.. The catalysed reaction is ATP + H2O = ADP + phosphate + H(+). In terms of biological role, a helicase/nuclease that prepares dsDNA breaks (DSB) for recombinational DNA repair. Binds to DSBs and unwinds DNA via a highly rapid and processive ATP-dependent bidirectional helicase activity. Unwinds dsDNA until it encounters a Chi (crossover hotspot instigator) sequence from the 3' direction. Cuts ssDNA a few nucleotides 3' to the Chi site. The properties and activities of the enzyme are changed at Chi. The Chi-altered holoenzyme produces a long 3'-ssDNA overhang and facilitates RecA-binding to the ssDNA for homologous DNA recombination and repair. Holoenzyme degrades any linearized DNA that is unable to undergo homologous recombination. In the holoenzyme this subunit contributes ATPase, 3'-5' helicase, exonuclease activity and loads RecA onto ssDNA. This is RecBCD enzyme subunit RecB from Buchnera aphidicola subsp. Schizaphis graminum (strain Sg).